The chain runs to 498 residues: Glycerol kinase (498 aa).

ADP is bound at residue T12. Residues T12, T13, and S14 each contribute to the ATP site. T12 provides a ligand contact to sn-glycerol 3-phosphate. Residue R16 coordinates ADP. Positions 82, 83, 134, and 243 each coordinate sn-glycerol 3-phosphate. The glycerol site is built by R82, E83, Y134, D243, and Q244. ADP contacts are provided by T265 and G308. Positions 265, 308, 312, and 409 each coordinate ATP. Residues G409 and N413 each contribute to the ADP site.

The protein belongs to the FGGY kinase family. In terms of assembly, homotetramer and homodimer (in equilibrium).

It carries out the reaction glycerol + ATP = sn-glycerol 3-phosphate + ADP + H(+). It participates in polyol metabolism; glycerol degradation via glycerol kinase pathway; sn-glycerol 3-phosphate from glycerol: step 1/1. Activated by phosphorylation and inhibited by fructose 1,6-bisphosphate (FBP). Its function is as follows. Key enzyme in the regulation of glycerol uptake and metabolism. Catalyzes the phosphorylation of glycerol to yield sn-glycerol 3-phosphate. In Agathobacter rectalis (strain ATCC 33656 / DSM 3377 / JCM 17463 / KCTC 5835 / VPI 0990) (Eubacterium rectale), this protein is Glycerol kinase.